The following is a 1121-amino-acid chain: Cilia- and flagella-associated protein 70 (1121 aa).

Positions 410 to 428 (NLKEDKPVKEKDIDGRPRP) are enriched in basic and acidic residues. The tract at residues 410 to 457 (NLKEDKPVKEKDIDGRPRPGDVQAPSIKSQSSDTPLEGEPPLSHNPEG) is disordered. 3 TPR repeats span residues 635–668 (SEQL…EPQN), 669–702 (LDHW…NQSH), and 704–736 (HSLL…EPTN). Disordered stretches follow at residues 778-802 (KQKS…PWGI) and 836-858 (QSDS…QKPS). TPR repeat units lie at residues 929 to 962 (CEYY…DYLN), 963 to 996 (PNVW…VVDA), 1000 to 1033 (HFIF…SPSC), 1035 to 1066 (TWLG…NNYN), and 1068 to 1100 (EVWA…KLKD).

The protein belongs to the CFAP70 family. As to expression, expressed in testis.

It localises to the cell projection. The protein resides in the cilium. Its subcellular location is the flagellum. The protein localises to the cytoplasm. It is found in the cytoskeleton. It localises to the flagellum basal body. The protein resides in the cilium axoneme. Its function is as follows. Axoneme-binding protein that plays a role in the regulation of ciliary motility and cilium length. In Homo sapiens (Human), this protein is Cilia- and flagella-associated protein 70.